The following is a 225-amino-acid chain: Glutathione S-transferase-like protein tpcF (225 aa).

The GST N-terminal domain occupies 4–85 (IQPITVYGKG…YLVSHYDPDH (82 aa)). In terms of domain architecture, GST C-terminal spans 92-225 (GSNLAALATQ…KGMADIFPST (134 aa)).

The protein belongs to the GST superfamily. In terms of tissue distribution, specifically expressed in conidia.

It functions in the pathway secondary metabolite biosynthesis. In terms of biological role, glutathione S-transferase-like protein; part of the gene cluster that mediates the biosynthesis of trypacidin, a mycotoxin with antiprotozoal activity and that plays a role in the infection process. The pathway begins with the synthesis of atrochrysone thioester by the polyketide synthase (PKS) tpcC. The atrochrysone carboxyl ACP thioesterase tpcB then breaks the thioester bond and releases the atrochrysone carboxylic acid from tpcC. The decarboxylase tpcK converts atrochrysone carboxylic acid to atrochrysone which is further reduced into emodin anthrone. The next step is performed by the emodin anthrone oxygenase tpcL that catalyzes the oxidation of emodinanthrone to emodin. Emodin O-methyltransferase encoded by tpcA catalyzes methylation of the 8-hydroxy group of emodin to form questin. Ring cleavage of questin by questin oxidase tpcI leads to desmethylsulochrin via several intermediates including questin epoxide. Another methylation step catalyzed by tpcM leads to the formation of sulochrin which is further converted to monomethylsulfochrin by tpcH. Finally, the tpcJ catalyzes the conversion of monomethylsulfochrin to trypacidin. Trypacidin is toxic for human pulmonary and bronchial epithelial cells by initiating the intracellular formation of nitric oxide (NO) and hydrogen peroxide (H(2)O(2)), thus triggering host necrotic cell death. The trypacidin pathway is also able to produce endocrocin via a distinct route from the endocrocin Enc pathway. The chain is Glutathione S-transferase-like protein tpcF from Aspergillus fumigatus (strain ATCC MYA-4609 / CBS 101355 / FGSC A1100 / Af293) (Neosartorya fumigata).